Here is a 693-residue protein sequence, read N- to C-terminus: Cyclin-dependent kinase G-1 (693 aa).

A compositionally biased stretch (gly residues) spans 1–10 (MAAGSHGGYR). 2 disordered regions span residues 1–148 (MAAG…ARDP) and 236–308 (KKKK…DDYP). The span at 13-24 (EVAREREHDVGV) shows a compositional bias: basic and acidic residues. Residues 26-39 (RRSKEHYHHRHPSR) show a composition bias toward basic residues. 3 stretches are compositionally biased toward basic and acidic residues: residues 40 to 54 (HRDS…RSGG), 75 to 87 (RPSE…REPG), and 97 to 122 (RSGE…EEAK). Low complexity predominate over residues 268–284 (SVRSSSRSSDSGVLQGS). Over residues 287–304 (RDLEVEKGDNIDVEKAAD) the composition is skewed to basic and acidic residues. The Protein kinase domain maps to 349 to 640 (FERLNTINEG…AEDALNHEWF (292 aa)). ATP contacts are provided by residues 355 to 363 (INEGTYGVV) and lysine 378. Phosphothreonine is present on threonine 359. A Phosphotyrosine modification is found at tyrosine 360. The Proton acceptor role is filled by aspartate 473. Serine 500 carries the phosphoserine modification. Position 506 is a phosphothreonine (threonine 506). Positions 664-693 (RFKKHMKSPDPLEEQWMKEQGNNGDRGLFG) are disordered.

Belongs to the protein kinase superfamily. CMGC Ser/Thr protein kinase family. CDC2/CDKX subfamily.

The catalysed reaction is L-seryl-[protein] + ATP = O-phospho-L-seryl-[protein] + ADP + H(+). It catalyses the reaction L-threonyl-[protein] + ATP = O-phospho-L-threonyl-[protein] + ADP + H(+). The enzyme catalyses [DNA-directed RNA polymerase] + ATP = phospho-[DNA-directed RNA polymerase] + ADP + H(+). In Oryza sativa subsp. indica (Rice), this protein is Cyclin-dependent kinase G-1 (CDKG-1).